The primary structure comprises 377 residues: Iris (377 aa).

Residues Asn-11 and Asn-226 are each glycosylated (N-linked (GlcNAc...) asparagine).

This sequence belongs to the serpin family. In terms of tissue distribution, female saliva (at protein level). Female salivary gland (at protein level).

It is found in the secreted. Serine protease inhibitor with anticoagulant and immunosuppressive properties that can modulate blood feeding of ticks on vertebrate species. Strongly inhibits human leukocyte elastase (ELANE) and porcine pancreatic elastase. Moderately inhibits human tPA/tissue-type plasminogen activator (PLAT), coagulation factor Xa (F10), thrombin (F2) and trypsin. Does not inhibit human plasmin (PLG). Inhibits platelet aggregation. Inhibits the intrinsic pathway of blood coagulation in the host. Inhibits fibrinolysis in the host. Inhibits proliferation of mouse splenocytes. Decreases the number of IFN-gamma (IFNG)-producing human peripheral blood mononuclear cells (PBMCs) after stimulation with phytohemagglutinin A (PHA). Increases the number of IL10-producing human PBMCs after stimulation with lipopolysaccharides (LPS) with no significant effect on IL10 production. Inhibits production of IFNG, IL6, TNF-alpha (TNF) and CXCL8 by human PBMCs. Binds to monocyte/macrophage subpopulation of the host PBMCs. Increases both survival rate and survival time in mice with LPS-induced endotoxemic shock. This Ixodes ricinus (Common tick) protein is Iris.